The following is a 103-amino-acid chain: Small ribosomal subunit protein uS10 (103 aa).

Positions 35–59 are disordered; that stretch reads LSGPVPLPTKTLEVPSRKSPDGEGT.

This sequence belongs to the universal ribosomal protein uS10 family. In terms of assembly, part of the 30S ribosomal subunit.

Its function is as follows. Involved in the binding of tRNA to the ribosomes. This is Small ribosomal subunit protein uS10 (rps10) from Haloarcula marismortui (strain ATCC 43049 / DSM 3752 / JCM 8966 / VKM B-1809) (Halobacterium marismortui).